The chain runs to 320 residues: tRNA(Ile)-lysidine synthase, chloroplastic (320 aa).

31 to 36 lines the ATP pocket; sequence SGGKDS.

It belongs to the tRNA(Ile)-lysidine synthase family.

It is found in the plastid. The protein localises to the chloroplast. The enzyme catalyses cytidine(34) in tRNA(Ile2) + L-lysine + ATP = lysidine(34) in tRNA(Ile2) + AMP + diphosphate + H(+). Ligates lysine onto the cytidine present at position 34 of the AUA codon-specific tRNA(Ile) that contains the anticodon CAU, in an ATP-dependent manner. Cytidine is converted to lysidine, thus changing the amino acid specificity of the tRNA from methionine to isoleucine. This Gracilaria tenuistipitata var. liui (Red alga) protein is tRNA(Ile)-lysidine synthase, chloroplastic.